We begin with the raw amino-acid sequence, 152 residues long: 3-hydroxyacyl-[acyl-carrier-protein] dehydratase FabZ (152 aa).

The active site involves histidine 58.

Belongs to the thioester dehydratase family. FabZ subfamily.

The protein localises to the cytoplasm. The enzyme catalyses a (3R)-hydroxyacyl-[ACP] = a (2E)-enoyl-[ACP] + H2O. Its function is as follows. Involved in unsaturated fatty acids biosynthesis. Catalyzes the dehydration of short chain beta-hydroxyacyl-ACPs and long chain saturated and unsaturated beta-hydroxyacyl-ACPs. The sequence is that of 3-hydroxyacyl-[acyl-carrier-protein] dehydratase FabZ from Prochlorococcus marinus (strain AS9601).